The primary structure comprises 180 residues: uncharacterized protein (180 aa).

One can recognise an HTH dtxR-type domain in the interval 17–80 (RRSRILHYLM…LIPNMGVRLT (64 aa)).

It belongs to the DtxR/MntR family.

This is an uncharacterized protein from Aeropyrum pernix (strain ATCC 700893 / DSM 11879 / JCM 9820 / NBRC 100138 / K1).